Reading from the N-terminus, the 188-residue chain is Ribosome maturation factor RimP (188 aa).

Belongs to the RimP family.

The protein resides in the cytoplasm. Required for maturation of 30S ribosomal subunits. The polypeptide is Ribosome maturation factor RimP (Corynebacterium aurimucosum (strain ATCC 700975 / DSM 44827 / CIP 107346 / CN-1) (Corynebacterium nigricans)).